The chain runs to 286 residues: UPF0725 protein At2g20620 (286 aa).

Positions 1-49 are disordered; sequence MVLETPVCSPIDKESSSDDVQLNKPPKKKRKLDVVYPPRDNTSSSSDVK.

This sequence belongs to the UPF0725 (EMB2204) family.

The sequence is that of UPF0725 protein At2g20620 from Arabidopsis thaliana (Mouse-ear cress).